A 364-amino-acid chain; its full sequence is Matrix protein (364 aa).

Residues 23-26 (FPIV) carry the FPIV motif motif.

This sequence belongs to the morbillivirus/respirovirus/rubulavirus M protein family.

Its subcellular location is the virion. In terms of biological role, the M protein has a crucial role in virus assembly and interacts with the RNP complex as well as with the viral membrane. The chain is Matrix protein (M) from Gallus gallus (Chicken).